The primary structure comprises 338 residues: Probable G-protein coupled receptor 160 (338 aa).

Residues 1–23 (MTALSSENCSFQYQLRQTNQPLD) are Extracellular-facing. N8 is a glycosylation site (N-linked (GlcNAc...) asparagine). Residues 24-44 (VNYLLFLIILGKILLNILTLG) form a helical membrane-spanning segment. Residues 45–58 (MRRKNTCQNFMEYF) are Cytoplasmic-facing. The helical transmembrane segment at 59 to 79 (CISLAFVDLLLLVNISIILYF) threads the bilayer. Residues 80 to 93 (RDFVLLSIRFTKYH) lie on the Extracellular side of the membrane. The helical transmembrane segment at 94–114 (ICLFTQIISFTYGFLHYPVFL) threads the bilayer. At 115–136 (TACIDYCLNFSKTTKLSFKCQK) the chain is on the cytoplasmic side. The chain crosses the membrane as a helical span at residues 137-157 (LFYFFTVILIWISVLAYVLGD). The Extracellular portion of the chain corresponds to 158–177 (PAIYQSLKAQNAYSRHCPFY). The helical transmembrane segment at 178-198 (VSIQSYWLSFFMVMILFVAFI) threads the bilayer. At 199-244 (TCWEEVTTLVQAIRITSYMNETILYFPFSSHSSYTVRSKKIFLSKL) the chain is on the cytoplasmic side. The helical transmembrane segment at 245–265 (IVCFLSTWLPFVLLQVIIVLL) threads the bilayer. The Extracellular segment spans residues 266–268 (KVQ). The chain crosses the membrane as a helical span at residues 269 to 289 (IPAYIEMNIPWLYFVNSFLIA). Residues 290–338 (TVYWFNCHKLNLKDIGLPLDPFVNWKCCFIPLTIPNLEQIEKPISIMIC) are Cytoplasmic-facing.

Belongs to the G-protein coupled receptor 1 family.

Its subcellular location is the cell membrane. Functionally, orphan receptor. This chain is Probable G-protein coupled receptor 160 (GPR160), found in Homo sapiens (Human).